The sequence spans 166 residues: Endoribonuclease YbeY (166 aa).

The Zn(2+) site is built by H132, H136, and H142.

Belongs to the endoribonuclease YbeY family. Requires Zn(2+) as cofactor.

The protein localises to the cytoplasm. In terms of biological role, single strand-specific metallo-endoribonuclease involved in late-stage 70S ribosome quality control and in maturation of the 3' terminus of the 16S rRNA. This chain is Endoribonuclease YbeY, found in Clostridium botulinum (strain Alaska E43 / Type E3).